The following is a 416-amino-acid chain: MFSFYFNDNKITKLLMVGYGSTGKSVCDFLANFIDITVDISQNDDEFVNYDLNSYDLITVSPGIPLNKSPYRALTKFKDKIVSDIDIFYQYIKDTKAKTIAVTGSNGKSTVVTMTDFVLKDLGYKSILVGNIGTPALNKIGEKFDYCVVEVSSFQINLFNCVRFDLGCIINVSPDHLDRYQNFEQYKQSKLNLAKFSNDFFVYDVHNGIKYAGEYQIIRGAIYRNSTKLLDIVETKLFGEHNLENIIVVLNILDRLGLDINQAIDSIKKFKGLEHRCKIVKKVNSTTYINDSKGTNVGATIAALNSITNSKNIILLLGGVAKGGDFSLMIKSLDKYVKYVYIYGADKEYIESYIKGYCKYQLCNNMKQAFELSSQKANSNEIVLLSPACASFDEFSGYAQRGEVFQNLVAQLEQKS.

104-110 (GSNGKST) serves as a coordination point for ATP.

This sequence belongs to the MurCDEF family.

It localises to the cytoplasm. The enzyme catalyses UDP-N-acetyl-alpha-D-muramoyl-L-alanine + D-glutamate + ATP = UDP-N-acetyl-alpha-D-muramoyl-L-alanyl-D-glutamate + ADP + phosphate + H(+). Its pathway is cell wall biogenesis; peptidoglycan biosynthesis. Functionally, cell wall formation. Catalyzes the addition of glutamate to the nucleotide precursor UDP-N-acetylmuramoyl-L-alanine (UMA). This is UDP-N-acetylmuramoylalanine--D-glutamate ligase from Francisella tularensis subsp. tularensis (strain FSC 198).